Consider the following 522-residue polypeptide: 3-octaprenyl-4-hydroxybenzoate carboxy-lyase (522 aa).

A Mn(2+)-binding site is contributed by asparagine 181. Residues 184–186 (IYR), 198–200 (RWL), and 203–204 (RG) contribute to the prenylated FMN site. Glutamate 247 serves as a coordination point for Mn(2+). Aspartate 322 serves as the catalytic Proton donor.

The protein belongs to the UbiD family. In terms of assembly, homohexamer. It depends on prenylated FMN as a cofactor. The cofactor is Mn(2+).

The protein resides in the cell membrane. It carries out the reaction a 4-hydroxy-3-(all-trans-polyprenyl)benzoate + H(+) = a 2-(all-trans-polyprenyl)phenol + CO2. It participates in cofactor biosynthesis; ubiquinone biosynthesis. Its function is as follows. Catalyzes the decarboxylation of 3-octaprenyl-4-hydroxy benzoate to 2-octaprenylphenol, an intermediate step in ubiquinone biosynthesis. The polypeptide is 3-octaprenyl-4-hydroxybenzoate carboxy-lyase (Paraburkholderia xenovorans (strain LB400)).